Reading from the N-terminus, the 163-residue chain is Nucleotide-binding protein ROP_16630 (163 aa).

The protein belongs to the YajQ family.

Its function is as follows. Nucleotide-binding protein. This is Nucleotide-binding protein ROP_16630 from Rhodococcus opacus (strain B4).